The sequence spans 329 residues: Putative ubiquitin thioesterase otu1 (329 aa).

Residues 7 to 89 (RLKYENQSAV…ATSFSTNEPA (83 aa)) form a UBX-like region. The segment at 85–127 (TNEPAKPPIPNAATKPTFPPQTEISNPPAVSHQSKNTSQDPPY) is disordered. Polar residues predominate over residues 115 to 124 (SHQSKNTSQD). Positions 135 to 254 (IALRVMPDDN…GIHYDLAALA (120 aa)) constitute an OTU domain. The interval 140 to 146 (MPDDNSC) is cys-loop. Asp143 is a catalytic residue. The active-site Nucleophile is the Cys146. A variable-loop region spans residues 193–203 (IRKETSWGGYI). The segment at 243–247 (YSGIH) is his-loop. Ile246 serves as a coordination point for substrate. His247 is an active-site residue. The tract at residues 272–277 (VTITPY) is S2 site. The C2H2-type zinc finger occupies 299–323 (IRCTICGTGLVGEKDATAHALATGH). The active site involves His323.

It localises to the cytoplasm. Its subcellular location is the nucleus. The catalysed reaction is Thiol-dependent hydrolysis of ester, thioester, amide, peptide and isopeptide bonds formed by the C-terminal Gly of ubiquitin (a 76-residue protein attached to proteins as an intracellular targeting signal).. In terms of biological role, hydrolase that can remove conjugated ubiquitin from proteins and may therefore play an important regulatory role at the level of protein turnover by preventing degradation. Has a role in meiosis. The polypeptide is Putative ubiquitin thioesterase otu1 (otu1) (Schizosaccharomyces pombe (strain 972 / ATCC 24843) (Fission yeast)).